We begin with the raw amino-acid sequence, 340 residues long: Ketol-acid reductoisomerase (NADP(+)) (340 aa).

One can recognise a KARI N-terminal Rossmann domain in the interval 5–182 (MEYEKDVKVA…GSARVGLLET (178 aa)). Residues 26–29 (YGSQ), arginine 49, serine 53, and 83–86 (DEIQ) each bind NADP(+). Residue histidine 108 is part of the active site. Glycine 134 lines the NADP(+) pocket. Residues 183 to 328 (TYKEETEEDL…AELRKAMPFV (146 aa)) enclose the KARI C-terminal knotted domain. Positions 191, 195, 227, and 231 each coordinate Mg(2+). Serine 252 lines the substrate pocket.

The protein belongs to the ketol-acid reductoisomerase family. It depends on Mg(2+) as a cofactor.

It carries out the reaction (2R)-2,3-dihydroxy-3-methylbutanoate + NADP(+) = (2S)-2-acetolactate + NADPH + H(+). The catalysed reaction is (2R,3R)-2,3-dihydroxy-3-methylpentanoate + NADP(+) = (S)-2-ethyl-2-hydroxy-3-oxobutanoate + NADPH + H(+). The protein operates within amino-acid biosynthesis; L-isoleucine biosynthesis; L-isoleucine from 2-oxobutanoate: step 2/4. Its pathway is amino-acid biosynthesis; L-valine biosynthesis; L-valine from pyruvate: step 2/4. Functionally, involved in the biosynthesis of branched-chain amino acids (BCAA). Catalyzes an alkyl-migration followed by a ketol-acid reduction of (S)-2-acetolactate (S2AL) to yield (R)-2,3-dihydroxy-isovalerate. In the isomerase reaction, S2AL is rearranged via a Mg-dependent methyl migration to produce 3-hydroxy-3-methyl-2-ketobutyrate (HMKB). In the reductase reaction, this 2-ketoacid undergoes a metal-dependent reduction by NADPH to yield (R)-2,3-dihydroxy-isovalerate. In Streptococcus sanguinis (strain SK36), this protein is Ketol-acid reductoisomerase (NADP(+)).